Consider the following 4857-residue polypeptide: Dual E2 ubiquitin-conjugating enzyme/E3 ubiquitin-protein ligase BIRC6 (4857 aa).

2 WD repeats span residues D68–A106 and L107–C136. The BIR repeat unit spans residues P268–A377. Zn(2+)-binding residues include C328, C331, H348, and C355. The WD 3 repeat unit spans residues F379 to I426. Disordered stretches follow at residues D465–K498 and A579–L618. The segment covering D472–S482 has biased composition (acidic residues). 5 positions are modified to phosphoserine: S473, S480, S482, S581, and S590. WD repeat units lie at residues M501 to L720, N730 to K850, D851 to E927, and P928 to I966. A compositionally biased stretch (polar residues) spans A579 to H588. The span at S595–L618 shows a compositional bias: polar residues. Disordered regions lie at residues L984–P1004 and Q1053–H1073. Residues S992 to P1004 show a composition bias toward polar residues. Positions R1056–Q1065 are enriched in basic residues. T1710 is modified (phosphothreonine). S2222 and S2955 each carry phosphoserine. A disordered region spans residues S2945–V2973. The segment at H3189–R3193 is HRRAR loop; important for DIABLO/SMAC and HTRA2 binding. Residues D3819–Q4068 enclose the Ubiquitin-like domain. Residues Q3923–S3949 are disordered. At T3931 the chain carries Phosphothreonine. Position 4023 is a phosphoserine (S4023). The tract at residues R4260 to E4283 is disordered. Positions V4261 to E4283 are enriched in polar residues. The UBC core domain occupies A4573–M4740. C4666 functions as the Glycyl thioester intermediate in the catalytic mechanism. The disordered stretch occupies residues E4835 to L4857. Over residues K4844–L4857 the composition is skewed to polar residues.

This sequence belongs to the BIRC6 family. As to quaternary structure, homodimer; antiparallel. Interacts with RNF41. Interacts with DIABLO/SMAC, likely with higher affinity to SMAC dimer than SMAC monomer; this interaction blocks the substrate-binding site and inhibits the caspase inhibition activity of BIRC6. Interacts with KIF23/MKLP1, USP8/UBPY, BIRC5/survivin, MAP2K1/MEK1, RAB8A/RAB8, RAB11A/RAB11, PLK1, EXOC3/SEC6 and EXOC4/SEC8. In terms of processing, ubiquitinated; mediated by RNF41 E3 ligase and leads to proteasomal degradation, impairing inhibition of apoptosis. Deubiquitinated by USP8/UBPY. Autoubiquitinated; mediated by E1 ubiquitin activating enzyme UBA6. Post-translationally, proteolytically cleaved. Acts as substrate for CASP3, CASP6, CASP7, CASP9 and HTRA2. As to expression, expressed in brain cancer cells.

Its subcellular location is the golgi apparatus. It localises to the trans-Golgi network membrane. The protein resides in the endosome. It is found in the cytoplasm. The protein localises to the cytoskeleton. Its subcellular location is the spindle pole. It localises to the microtubule organizing center. The protein resides in the centrosome. It is found in the midbody. The protein localises to the midbody ring. The catalysed reaction is S-ubiquitinyl-[E1 ubiquitin-activating enzyme]-L-cysteine + [acceptor protein]-L-lysine = [E1 ubiquitin-activating enzyme]-L-cysteine + N(6)-monoubiquitinyl-[acceptor protein]-L-lysine.. Its activity is regulated as follows. Inhibited by DIABLO/SMAC, which competes for the substrate-binding sites on BIRC6. BIRC6 inhibits caspases and protease by ubiquitination but BIRC6 itself is subjected to protease cleavage by CASP3, CASP6, CASP7, CASP9 and HTRA2 by protease cleavage. Anti-apoptotic protein known as inhibitor of apoptosis (IAP) which can regulate cell death by controlling caspases and by acting as an E3 ubiquitin-protein ligase. Unlike most IAPs, does not contain a RING domain and it is not a RING-type E3 ligase. Instead acts as a dual E2/E3 enzyme that combines ubiquitin conjugating (E2) and ubiquitin ligase (E3) activities in a single polypeptide. Ubiquitination is mediated by a non-canonical E1 ubiquitin activating enzyme UBA6. Ubiquitinates CASP3, CASP7 and CASP9 and inhibits their caspase activity; also ubiquitinates their procaspases but to a weaker extent. Ubiquitinates pro-apoptotic factors DIABLO/SMAC and HTRA2. DIABLO/SMAC antagonizes the caspase inhibition activity of BIRC6 by competing for the same binding sites as the caspases. Ubiquitinates the autophagy protein MAP1LC3B; this activity is also inhibited by DIABLO/SMAC. Important regulator for the final stages of cytokinesis. Crucial for normal vesicle targeting to the site of abscission, but also for the integrity of the midbody and the midbody ring, and its striking ubiquitin modification. This Homo sapiens (Human) protein is Dual E2 ubiquitin-conjugating enzyme/E3 ubiquitin-protein ligase BIRC6 (BIRC6).